Reading from the N-terminus, the 772-residue chain is MASLIYRQLLYNSYSVDLSDEITNIGAEKKENVTVQLGQFAQSQYAPVSWGSGETLSGNVEEQPLDGPYTPDSSNLPSNYWYLVNPSNDGVVFSVTDNSTFWMFTYLVLPNTAQTNVTVNVMNETVNISIDNSGSTYRFVDYIKTSSTQAYGSRNYLNTAHRLQAYRRDGDGNISNYWGADTQGDLRVGTYSHPVPNAVINLNADFSVIPDSQQEICTEYIRGGLPAMQTTTYVTPISYTIRSQRIVRPNEDIVISKASLWKEVQYNRDIVIRFVFANNIIKAGGLGYKWSEISYKANNYQYTYMRDGVEVVAHTIVSVNGVSVYNYNTGPLPTDFMIRNYDVLKESSFVYIDYWDDSQAFRNMVYVRSLSAELNQVRCVGGHSSFALPVGSWPVMQGGSVILTFDGVTLSTQFTDFVSLNSLRFRFRCAVSEPPFRVTGTRISNLYGFPAANPMGDQQYYEASGRFSLISLVPSNDDYQTPIANSVTVRQDLERQLDEMRKEFNELSANIALSQLIDLALLPLDMFSMFSGIQSTVEAAKTFATSVMKKFRKSDLAKSVNSLTDAITDAASSISRSSTLRSANSAVSVWTDISDIVDSTDNVVAATATAAAKKFRVKEFTTEFDGVSFDDISAAVVKTKMNKFNVVDEEILPRIITEASEKFIPNRAYRLIDGEKVYEVTTEGKSFAYLTETFEEVVFDAERFAELVTVSLVISAIIDFKTIKNLNDNYGITREQALNMLRSDPKVLRSFINQNNPIIKNRIEQLILQCRI.

The segment at 65-225 is spike head; that stretch reads LDGPYTPDSS…ICTEYIRGGL (161 aa). Residues 247-478 form a spike body and stalk (antigen domain) region; the sequence is VRPNEDIVIS…LISLVPSNDD (232 aa). Positions 388–408 are hydrophobic; possible role in virus entry into host cell; that stretch reads LPVGSWPVMQGGSVILTFDGV. Residues 483-510 adopt a coiled-coil conformation; the sequence is IANSVTVRQDLERQLDEMRKEFNELSAN. A spike foot region spans residues 509 to 772; that stretch reads ANIALSQLID…IEQLILQCRI (264 aa).

This sequence belongs to the rotavirus VP4 family. Homotrimer. VP4 adopts a dimeric appearance above the capsid surface, while forming a trimeric base anchored inside the capsid layer. Only hints of the third molecule are observed above the capsid surface. It probably performs a series of molecular rearrangements during viral entry. Prior to trypsin cleavage, it is flexible. The priming trypsin cleavage triggers its rearrangement into rigid spikes with approximate two-fold symmetry of their protruding parts. After an unknown second triggering event, cleaved VP4 may undergo another rearrangement, in which two VP5* subunits fold back on themselves and join a third subunit to form a tightly associated trimer, shaped like a folded umbrella. Interacts with VP6. Interacts with VP7. In terms of assembly, homotrimer. The trimer is coiled-coil stabilized by its C-terminus, however, its N-terminus, known as antigen domain or 'body', seems to be flexible allowing it to self-associate either as a dimer or a trimer. Proteolytic cleavage by trypsin results in activation of VP4 functions and greatly increases infectivity. The penetration into the host cell is dependent on trypsin treatment of VP4. It produces two peptides, VP5* and VP8* that remain associated with the virion. Cleavage of VP4 by trypsin probably occurs in vivo in the lumen of the intestine prior to infection of enterocytes. Trypsin seems to be incorporated into the three-layered viral particles but remains inactive as long as the viral outer capsid is intact and would only be activated upon the solubilization of the latter.

It localises to the virion. The protein resides in the host rough endoplasmic reticulum. It is found in the host cell membrane. Its subcellular location is the host cytoplasm. The protein localises to the host cytoskeleton. It localises to the host endoplasmic reticulum-Golgi intermediate compartment. Spike-forming protein that mediates virion attachment to the host epithelial cell receptors and plays a major role in cell penetration, determination of host range restriction and virulence. Rotavirus attachment and entry into the host cell probably involves multiple sequential contacts between the outer capsid proteins VP4 and VP7, and the cell receptors. It is subsequently lost, together with VP7, following virus entry into the host cell. Following entry into the host cell, low intracellular or intravesicular Ca(2+) concentration probably causes the calcium-stabilized VP7 trimers to dissociate from the virion. This step is probably necessary for the membrane-disrupting entry step and the release of VP4, which is locked onto the virion by VP7. During the virus exit from the host cell, VP4 seems to be required to target the newly formed virions to the host cell lipid rafts. Functionally, forms the spike 'foot' and 'body' and acts as a membrane permeabilization protein that mediates release of viral particles from endosomal compartments into the cytoplasm. During entry, the part of VP5* that protrudes from the virus folds back on itself and reorganizes from a local dimer to a trimer. This reorganization may be linked to membrane penetration by exposing VP5* hydrophobic region. In integrin-dependent strains, VP5* targets the integrin heterodimer ITGA2/ITGB1 for cell attachment. In terms of biological role, forms the head of the spikes and mediates the recognition of specific host cell surface glycans. It is the viral hemagglutinin and an important target of neutralizing antibodies. In sialic acid-dependent strains, VP8* binds to host cell sialic acid, most probably a ganglioside, providing the initial contact. In some other strains, VP8* mediates the attachment to histo-blood group antigens (HBGAs) for viral entry. The chain is Outer capsid protein VP4 from Rotavirus A (isolate RVA/Cow/Japan/KK3/1983/G10P8[11]) (RV-A).